Consider the following 210-residue polypeptide: MKPASVIIMDEHPIVRMSIEVLLGKNSNIQVVLKTDDSRTAIEYLRTYPVDLVILDIELPGTDGFTLLKRIKSIQEHTRILFLSSKSEAFYAGRAIRAGANGFVSKRKDLNDIYNAVKMILSGYSFFPSETLNFISNTRTPKGGHHDMPLSNREVTVLRYLANGMSNKEIAEQLLLSNKTISAHKANIFSKLGLHSIVELIDYAKSHELL.

The 117-residue stretch at 5 to 121 (SVIIMDEHPI…DIYNAVKMIL (117 aa)) folds into the Response regulatory domain. Asp-56 is modified (4-aspartylphosphate). In terms of domain architecture, HTH luxR-type spans 143 to 208 (GGHHDMPLSN…ELIDYAKSHE (66 aa)). Residues 167 to 186 (NKEIAEQLLLSNKTISAHKA) constitute a DNA-binding region (H-T-H motif).

The protein localises to the cytoplasm. The sequence is that of Fimbriae Z protein (fimZ) from Salmonella typhimurium (strain LT2 / SGSC1412 / ATCC 700720).